A 343-amino-acid chain; its full sequence is uncharacterized protein (343 aa).

An ATP-binding site is contributed by 33–40 (GPKSSGKS).

The protein belongs to the archaeal ATPase family.

This is an uncharacterized protein from Methanocaldococcus jannaschii (strain ATCC 43067 / DSM 2661 / JAL-1 / JCM 10045 / NBRC 100440) (Methanococcus jannaschii).